A 180-amino-acid chain; its full sequence is ATP-dependent protease subunit HslV (180 aa).

The active site involves T7. Residues A165, C168, and T171 each contribute to the Na(+) site.

Belongs to the peptidase T1B family. HslV subfamily. As to quaternary structure, a double ring-shaped homohexamer of HslV is capped on each side by a ring-shaped HslU homohexamer. The assembly of the HslU/HslV complex is dependent on binding of ATP.

The protein resides in the cytoplasm. It catalyses the reaction ATP-dependent cleavage of peptide bonds with broad specificity.. With respect to regulation, allosterically activated by HslU binding. Functionally, protease subunit of a proteasome-like degradation complex believed to be a general protein degrading machinery. This Geobacillus kaustophilus (strain HTA426) protein is ATP-dependent protease subunit HslV.